Consider the following 622-residue polypeptide: Low affinity potassium transport system protein Kup (622 aa).

12 helical membrane passes run 9 to 29 (LPAL…TSPL), 49 to 69 (VFGF…IKYI), 101 to 121 (VLVI…VITP), 137 to 157 (PQLD…LFVI), 163 to 183 (GMVG…LAVL), 213 to 233 (VSFI…ALYA), 247 to 267 (WFSV…ALLL), 276 to 296 (PFFL…ATLA), 337 to 357 (IYIP…IVSF), 363 to 383 (LAAA…ILSA), 395 to 415 (LFVG…FSAN), and 419 to 439 (IVSG…VMTT).

Belongs to the HAK/KUP transporter (TC 2.A.72) family.

The protein localises to the cell inner membrane. The enzyme catalyses K(+)(in) + H(+)(in) = K(+)(out) + H(+)(out). Functionally, responsible for the low-affinity transport of potassium into the cell. Likely operates as a K(+):H(+) symporter. This Klebsiella pneumoniae subsp. pneumoniae (strain ATCC 700721 / MGH 78578) protein is Low affinity potassium transport system protein Kup.